The chain runs to 400 residues: Nicotinate phosphoribosyltransferase (400 aa).

His-220 bears the Phosphohistidine; by autocatalysis mark.

The protein belongs to the NAPRTase family. In terms of processing, transiently phosphorylated on a His residue during the reaction cycle. Phosphorylation strongly increases the affinity for substrates and increases the rate of nicotinate D-ribonucleotide production. Dephosphorylation regenerates the low-affinity form of the enzyme, leading to product release.

The catalysed reaction is nicotinate + 5-phospho-alpha-D-ribose 1-diphosphate + ATP + H2O = nicotinate beta-D-ribonucleotide + ADP + phosphate + diphosphate. Its pathway is cofactor biosynthesis; NAD(+) biosynthesis; nicotinate D-ribonucleotide from nicotinate: step 1/1. In terms of biological role, catalyzes the synthesis of beta-nicotinate D-ribonucleotide from nicotinate and 5-phospho-D-ribose 1-phosphate at the expense of ATP. The chain is Nicotinate phosphoribosyltransferase from Salmonella typhimurium (strain LT2 / SGSC1412 / ATCC 700720).